We begin with the raw amino-acid sequence, 70 residues long: MAKRCEVCGKAPRSGNTVSHSDKKSGRWFRPNLQKVRVVLPDGTIKRMRVCTSCLKSGKVKKYVGQVSEV.

The interval 1–26 is disordered; it reads MAKRCEVCGKAPRSGNTVSHSDKKSG.

This sequence belongs to the bacterial ribosomal protein bL28 family.

The sequence is that of Large ribosomal subunit protein bL28 (rpmB) from Thermotoga maritima (strain ATCC 43589 / DSM 3109 / JCM 10099 / NBRC 100826 / MSB8).